The following is a 315-amino-acid chain: tRNA dimethylallyltransferase (315 aa).

18-25 (GPTASGKT) provides a ligand contact to ATP. Position 20–25 (20–25 (TASGKT)) interacts with substrate. Interaction with substrate tRNA regions lie at residues 43-46 (DSAL), 167-171 (QRLSR), and 248-253 (RCVGYR).

This sequence belongs to the IPP transferase family. As to quaternary structure, monomer. Requires Mg(2+) as cofactor.

The enzyme catalyses adenosine(37) in tRNA + dimethylallyl diphosphate = N(6)-dimethylallyladenosine(37) in tRNA + diphosphate. Its function is as follows. Catalyzes the transfer of a dimethylallyl group onto the adenine at position 37 in tRNAs that read codons beginning with uridine, leading to the formation of N6-(dimethylallyl)adenosine (i(6)A). This Pseudoalteromonas atlantica (strain T6c / ATCC BAA-1087) protein is tRNA dimethylallyltransferase.